The sequence spans 160 residues: NADH-quinone oxidoreductase subunit B (160 aa).

[4Fe-4S] cluster contacts are provided by cysteine 37, cysteine 38, cysteine 102, and cysteine 132.

It belongs to the complex I 20 kDa subunit family. In terms of assembly, NDH-1 is composed of 14 different subunits. Subunits NuoB, C, D, E, F, and G constitute the peripheral sector of the complex. The cofactor is [4Fe-4S] cluster.

Its subcellular location is the cell inner membrane. It carries out the reaction a quinone + NADH + 5 H(+)(in) = a quinol + NAD(+) + 4 H(+)(out). NDH-1 shuttles electrons from NADH, via FMN and iron-sulfur (Fe-S) centers, to quinones in the respiratory chain. Couples the redox reaction to proton translocation (for every two electrons transferred, four hydrogen ions are translocated across the cytoplasmic membrane), and thus conserves the redox energy in a proton gradient. This is NADH-quinone oxidoreductase subunit B from Neisseria gonorrhoeae (strain ATCC 700825 / FA 1090).